The following is a 194-amino-acid chain: Isopentenyl-diphosphate Delta-isomerase (194 aa).

H23 and H30 together coordinate Mn(2+). In terms of domain architecture, Nudix hydrolase spans 28 to 162 (PLHLAFSCYV…TTDISPWCRQ (135 aa)). Residue C65 is part of the active site. Residue H67 coordinates Mn(2+). Position 85 (E85) interacts with Mg(2+). Mn(2+) is bound by residues E112 and E114. E114 is a catalytic residue.

This sequence belongs to the IPP isomerase type 1 family. Requires Mg(2+) as cofactor. The cofactor is Mn(2+).

It localises to the cytoplasm. It catalyses the reaction isopentenyl diphosphate = dimethylallyl diphosphate. Its pathway is isoprenoid biosynthesis; dimethylallyl diphosphate biosynthesis; dimethylallyl diphosphate from isopentenyl diphosphate: step 1/1. Catalyzes the 1,3-allylic rearrangement of the homoallylic substrate isopentenyl (IPP) to its highly electrophilic allylic isomer, dimethylallyl diphosphate (DMAPP). The polypeptide is Isopentenyl-diphosphate Delta-isomerase (Saccharopolyspora erythraea (strain ATCC 11635 / DSM 40517 / JCM 4748 / NBRC 13426 / NCIMB 8594 / NRRL 2338)).